Consider the following 492-residue polypeptide: uncharacterized protein (492 aa).

An N-terminal signal peptide occupies residues methionine 1–alanine 22. Asparagine 92, asparagine 97, asparagine 119, asparagine 146, asparagine 213, asparagine 267, and asparagine 458 each carry an N-linked (GlcNAc...) asparagine; by host glycan.

The protein resides in the secreted. This is an uncharacterized protein from Acanthamoeba polyphaga (Amoeba).